The primary structure comprises 127 residues: uncharacterized protein (127 aa).

Residues 85-107 (VYLGKIGFVLLHVFYLSCIAYYD) form a helical membrane-spanning segment.

It is found in the mitochondrion membrane. This is an uncharacterized protein from Dictyostelium discoideum (Social amoeba).